Reading from the N-terminus, the 883-residue chain is Puromycin-sensitive aminopeptidase (883 aa).

Substrate is bound by residues E125 and 265–269; that span reads GAMEN. A Zn(2+)-binding site is contributed by H301. The active-site Proton acceptor is E302. Zn(2+) is bound by residues H305 and E324.

The protein belongs to the peptidase M1 family. Zn(2+) is required as a cofactor.

It catalyses the reaction Release of an N-terminal amino acid, preferentially alanine, from a wide range of peptides, amides and arylamides.. With respect to regulation, strongly inhibited by puromycin and DAMPAQ-22. Functionally, aminopeptidase with broad substrate specificity for several peptides. Involved in proteolytic events essential for cell growth and viability. Plays an essential role during prophase I of meiosis. Required for correct meiotic reconbination in both male and female gametophytes. The protein is Puromycin-sensitive aminopeptidase (MPA1) of Arabidopsis thaliana (Mouse-ear cress).